The sequence spans 586 residues: Dual specificity tyrosine-phosphorylation-regulated kinase 3 (586 aa).

Basic and acidic residues predominate over residues 1 to 13; sequence MGGAARDRGRKDA. The disordered stretch occupies residues 1-187; it reads MGGAARDRGR…QGVIGGPNNG (187 aa). The 314-residue stretch at 208-521 folds into the Protein kinase domain; the sequence is YEVLKIIGKG…PAQALRHPWI (314 aa). ATP contacts are provided by residues 214 to 222, Lys237, and 287 to 290; these read IGKGSFGQV and FELL. Asp334 acts as the Proton acceptor in catalysis. Tyr368 is subject to Phosphotyrosine. The short motif at 467–480 is the Nuclear localization signal element; the sequence is RSRRGKKRGPPGSK.

Belongs to the protein kinase superfamily. CMGC Ser/Thr protein kinase family. MNB/DYRK subfamily. In terms of assembly, interacts with SIRT1. Mg(2+) is required as a cofactor. In terms of processing, ubiquitinated at anaphase by the anaphase-promoting complex (APC/C), leading to its degradation by the proteasome. Post-translationally, protein kinase activity is activated following autophosphorylation at Tyr-368.

The protein localises to the nucleus. Its subcellular location is the cytoplasm. It localises to the nucleus speckle. It is found in the cytoplasmic granule. The protein resides in the cytoskeleton. The protein localises to the microtubule organizing center. Its subcellular location is the centrosome. It catalyses the reaction L-seryl-[protein] + ATP = O-phospho-L-seryl-[protein] + ADP + H(+). It carries out the reaction L-threonyl-[protein] + ATP = O-phospho-L-threonyl-[protein] + ADP + H(+). The enzyme catalyses L-tyrosyl-[protein] + ATP = O-phospho-L-tyrosyl-[protein] + ADP + H(+). With respect to regulation, protein kinase activity is activated following autophosphorylation at Tyr-368. In terms of biological role, dual-specificity protein kinase that promotes disassembly of several types of membraneless organelles during mitosis, such as stress granules, nuclear speckles and pericentriolar material. Dual-specificity tyrosine-regulated kinases (DYRKs) autophosphorylate a critical tyrosine residue in their activation loop and phosphorylate their substrate on serine and threonine residues. Acts as a central dissolvase of membraneless organelles during the G2-to-M transition, after the nuclear-envelope breakdown: acts by mediating phosphorylation of multiple serine and threonine residues in unstructured domains of proteins, such as SRRM1 and PCM1. Does not mediate disassembly of all membraneless organelles: disassembly of P-body and nucleolus is not regulated by DYRK3. Dissolution of membraneless organelles at the onset of mitosis is also required to release mitotic regulators, such as ZNF207, from liquid-unmixed organelles where they are sequestered and keep them dissolved during mitosis. Regulates mTORC1 by mediating the dissolution of stress granules: during stressful conditions, DYRK3 partitions from the cytosol to the stress granule, together with mTORC1 components, which prevents mTORC1 signaling. When stress signals are gone, the kinase activity of DYRK3 is required for the dissolution of stress granule and mTORC1 relocation to the cytosol: acts by mediating the phosphorylation of the mTORC1 inhibitor AKT1S1, allowing full reactivation of mTORC1 signaling. Also acts as a negative regulator of EPO-dependent erythropoiesis: may place an upper limit on red cell production during stress erythropoiesis. Inhibits cell death due to cytokine withdrawal in hematopoietic progenitor cells. Promotes cell survival upon genotoxic stress through phosphorylation of SIRT1: this in turn inhibits p53/TP53 activity and apoptosis. The polypeptide is Dual specificity tyrosine-phosphorylation-regulated kinase 3 (Mus musculus (Mouse)).